Here is an 894-residue protein sequence, read N- to C-terminus: Alpha-actinin-2 (894 aa).

The interval 1–254 (MNQIEPGVQY…IMTYVSCFYH (254 aa)) is actin-binding. Calponin-homology (CH) domains are found at residues 38–142 (KQQR…LRFA) and 151–257 (TSAK…HAFA). The residue at position 237 (Thr-237) is a Phosphothreonine. 4 Spectrin repeats span residues 281 to 391 (RLME…WLLN), 401 to 506 (HLAE…ALER), 516 to 627 (QLHL…SLQE), and 637 to 740 (RLRR…EVET). 2 consecutive EF-hand domains span residues 753 to 788 (EQMNEFRASFNHFDRRKNGLMDHEDFRACLISMGYD) and 789 to 824 (LGEAEFARIMTLVDPNGQGTVTFQSFIDFMTRETAD). Ca(2+) contacts are provided by Asp-766, Asn-770, Asp-777, Asp-802, Asn-804, and Thr-808.

The protein belongs to the alpha-actinin family. As to quaternary structure, homodimer; antiparallel. Also forms heterodimers with ACTN3. Interacts with ADAM12, MYOZ1, MYOZ2 and MYOZ3. Interacts via its C-terminal region with the LDB3 PDZ domain. Interacts with XIRP2. Interacts with DST isoform 1 (via N-terminus). Interacts with PARVB. Interacts with SYNPO2. Post-translationally, ubiquitinated by FBXL22, leading to proteasomal degradation. As to expression, expressed in both skeletal and cardiac muscle.

The protein localises to the cytoplasm. It is found in the myofibril. The protein resides in the sarcomere. Its subcellular location is the z line. Functionally, F-actin cross-linking protein which is thought to anchor actin to a variety of intracellular structures. This is a bundling protein. The polypeptide is Alpha-actinin-2 (ACTN2) (Homo sapiens (Human)).